A 299-amino-acid polypeptide reads, in one-letter code: Probable lipid kinase YegS-like (299 aa).

In terms of domain architecture, DAGKc spans 2 to 133; the sequence is SRSAGSFLIL…IDIAHVNDKT (132 aa). ATP is bound by residues threonine 40, 66–72, and threonine 95; that span reads GDGTINE. Residues leucine 215, aspartate 218, and leucine 220 each contribute to the Mg(2+) site. The active-site Proton acceptor is the glutamate 271.

Belongs to the diacylglycerol/lipid kinase family. YegS lipid kinase subfamily. Requires Mg(2+) as cofactor. The cofactor is Ca(2+).

The protein resides in the cytoplasm. In terms of biological role, probably phosphorylates lipids; the in vivo substrate is unknown. The chain is Probable lipid kinase YegS-like from Cronobacter sakazakii (strain ATCC BAA-894) (Enterobacter sakazakii).